A 467-amino-acid chain; its full sequence is Dimethylamine methyltransferase MtbB3 (467 aa).

Pyl356 is a non-standard amino acid (pyrrolysine).

Belongs to the dimethylamine methyltransferase family.

The enzyme catalyses Co(I)-[dimethylamine-specific corrinoid protein] + dimethylamine + H(+) = methyl-Co(III)-[dimethylamine-specific corrinoid protein] + methylamine. Its pathway is one-carbon metabolism; methanogenesis from dimethylamine. In terms of biological role, catalyzes the transfer of a methyl group from dimethylamine to the corrinoid cofactor of MtbC. The polypeptide is Dimethylamine methyltransferase MtbB3 (mtbB3) (Methanosarcina acetivorans (strain ATCC 35395 / DSM 2834 / JCM 12185 / C2A)).